A 139-amino-acid chain; its full sequence is Classical arabinogalactan protein 3 (139 aa).

A signal peptide spans 1–21 (MALKTLQALIFLGLFAASCLA). At Gln22 the chain carries Pyrrolidone carboxylic acid. A disordered region spans residues 30–115 (TFLPPVESPS…PAPRADGPVA (86 aa)). 2 stretches are compositionally biased toward pro residues: residues 46–77 (AEPP…PPTT) and 97–107 (PSGPTPAPAPA). Residue Asp116 is the site of GPI-anchor amidated aspartate attachment. A propeptide spans 117 to 139 (SALTNKAFLVSTVIAGALYAVLA) (removed in mature form).

This sequence belongs to the classical AGP family. In terms of processing, O-glycosylated on the hydroxyproline residues. As to expression, expressed at a low level in roots.

The protein localises to the cell membrane. In terms of biological role, proteoglycan that seems to be implicated in diverse developmental roles such as differentiation, cell-cell recognition, embryogenesis and programmed cell death. This Arabidopsis thaliana (Mouse-ear cress) protein is Classical arabinogalactan protein 3 (AGP3).